A 120-amino-acid chain; its full sequence is Immunoglobulin kappa variable 2-29 (120 aa).

An N-terminal signal peptide occupies residues 1 to 20 (MRLPAQLLGLLMLWIPGSSA). The tract at residues 21–43 (DIVMTQTPLSLSVTPGQPASISC) is framework-1. One can recognise an Ig-like domain in the interval 21 to 120 (DIVMTQTPLS…YYCMQGIHLP (100 aa)). Cys43 and Cys113 are oxidised to a cystine. Residues 44 to 59 (KSSQSLLHSDGKTYLY) form a complementarity-determining-1 region. Residues 60–74 (WYLQKPGQSPQLLIY) form a framework-2 region. Residues 75–81 (EVSSRFS) are complementarity-determining-2. Residues 82–113 (GVPDRFSGSGSGTDFTLKISRVEAEDVGVYYC) form a framework-3 region. The segment at 114 to 120 (MQGIHLP) is complementarity-determining-3.

In terms of assembly, immunoglobulins are composed of two identical heavy chains and two identical light chains; disulfide-linked.

It localises to the secreted. The protein localises to the cell membrane. Functionally, v region of the variable domain of immunoglobulin light chains that participates in the antigen recognition. Immunoglobulins, also known as antibodies, are membrane-bound or secreted glycoproteins produced by B lymphocytes. In the recognition phase of humoral immunity, the membrane-bound immunoglobulins serve as receptors which, upon binding of a specific antigen, trigger the clonal expansion and differentiation of B lymphocytes into immunoglobulins-secreting plasma cells. Secreted immunoglobulins mediate the effector phase of humoral immunity, which results in the elimination of bound antigens. The antigen binding site is formed by the variable domain of one heavy chain, together with that of its associated light chain. Thus, each immunoglobulin has two antigen binding sites with remarkable affinity for a particular antigen. The variable domains are assembled by a process called V-(D)-J rearrangement and can then be subjected to somatic hypermutations which, after exposure to antigen and selection, allow affinity maturation for a particular antigen. This Homo sapiens (Human) protein is Immunoglobulin kappa variable 2-29.